The following is a 177-amino-acid chain: Nucleoside triphosphate/diphosphate phosphatase (177 aa).

Catalysis depends on Arg-23, which acts as the Proton donor. Residues Asn-87, Asp-103, Asp-105, Asp-107, Asp-120, and Glu-123 each coordinate Mg(2+).

The protein belongs to the Ntdp family. Mg(2+) serves as cofactor.

It catalyses the reaction a ribonucleoside 5'-triphosphate + H2O = a ribonucleoside 5'-diphosphate + phosphate + H(+). The enzyme catalyses a ribonucleoside 5'-diphosphate + H2O = a ribonucleoside 5'-phosphate + phosphate + H(+). In terms of biological role, has nucleoside phosphatase activity towards nucleoside triphosphates and nucleoside diphosphates. The chain is Nucleoside triphosphate/diphosphate phosphatase from Enterococcus faecalis (strain ATCC 700802 / V583).